The sequence spans 650 residues: Aminopeptidase B (650 aa).

A substrate-binding site is contributed by 298-302; the sequence is GGMEN. Histidine 325 is a binding site for Zn(2+). Glutamate 326 serves as the catalytic Proton acceptor. 2 residues coordinate Zn(2+): histidine 329 and glutamate 348. At lysine 446 the chain carries N6-acetyllysine.

It belongs to the peptidase M1 family. As to quaternary structure, monomer. The cofactor is Zn(2+).

The protein localises to the secreted. It catalyses the reaction Release of N-terminal Arg and Lys from oligopeptides when P1' is not Pro. Also acts on arylamides of Arg and Lys.. Functionally, exopeptidase which selectively removes arginine and/or lysine residues from the N-terminus of several peptide substrates including Arg(0)-Leu-enkephalin, Arg(0)-Met-enkephalin and Arg(-1)-Lys(0)-somatostatin-14. Can hydrolyze leukotriene A4 (LTA-4) into leukotriene B4 (LTB-4). The polypeptide is Aminopeptidase B (Rnpep) (Mus musculus (Mouse)).